The primary structure comprises 672 residues: DNA ligase (672 aa).

NAD(+) contacts are provided by residues Asp-32–Asp-36, Ser-81–Leu-82, and Glu-113. The N6-AMP-lysine intermediate role is filled by Lys-115. 4 residues coordinate NAD(+): Arg-136, Glu-173, Lys-290, and Lys-314. 4 residues coordinate Zn(2+): Cys-408, Cys-411, Cys-426, and Cys-432. Positions Glu-592 to Ser-672 constitute a BRCT domain.

Belongs to the NAD-dependent DNA ligase family. LigA subfamily. Mg(2+) serves as cofactor. The cofactor is Mn(2+).

It carries out the reaction NAD(+) + (deoxyribonucleotide)n-3'-hydroxyl + 5'-phospho-(deoxyribonucleotide)m = (deoxyribonucleotide)n+m + AMP + beta-nicotinamide D-nucleotide.. Its function is as follows. DNA ligase that catalyzes the formation of phosphodiester linkages between 5'-phosphoryl and 3'-hydroxyl groups in double-stranded DNA using NAD as a coenzyme and as the energy source for the reaction. It is essential for DNA replication and repair of damaged DNA. This Yersinia enterocolitica serotype O:8 / biotype 1B (strain NCTC 13174 / 8081) protein is DNA ligase.